The following is a 425-amino-acid chain: Histidine--tRNA ligase (425 aa).

The protein belongs to the class-II aminoacyl-tRNA synthetase family. Homodimer.

Its subcellular location is the cytoplasm. It catalyses the reaction tRNA(His) + L-histidine + ATP = L-histidyl-tRNA(His) + AMP + diphosphate + H(+). The polypeptide is Histidine--tRNA ligase (Shewanella sp. (strain ANA-3)).